The primary structure comprises 511 residues: Alpha-amylase 1 (511 aa).

A signal peptide spans 1–15; that stretch reads MKFFLLLSLIGFCWA. Gln16 carries the post-translational modification Pyrrolidone carboxylic acid. Cystine bridges form between Cys43–Cys101, Cys85–Cys130, and Cys156–Cys175. Ca(2+) contacts are provided by Asn115, Arg173, and Asp182. Position 210 (Arg210) interacts with chloride. Asp212 functions as the Nucleophile in the catalytic mechanism. Position 216 (His216) interacts with Ca(2+). Glu248 functions as the Proton donor in the catalytic mechanism. Residues Asn313 and Arg352 each coordinate chloride. Disulfide bonds link Cys393-Cys399 and Cys465-Cys477.

This sequence belongs to the glycosyl hydrolase 13 family. As to quaternary structure, monomer. Ca(2+) serves as cofactor. The cofactor is chloride. Expressed in liver and saliva.

It is found in the secreted. It carries out the reaction Endohydrolysis of (1-&gt;4)-alpha-D-glucosidic linkages in polysaccharides containing three or more (1-&gt;4)-alpha-linked D-glucose units.. The protein is Alpha-amylase 1 (Amy1) of Mus musculus (Mouse).